The primary structure comprises 722 residues: Cellulose synthase-like protein G2 (722 aa).

2 helical membrane passes run Ile-25–Ile-45 and Thr-51–Thr-71. Active-site residues include Asp-139 and Asp-437. 6 helical membrane passes run Phe-514–Ile-534, Phe-548–Leu-568, Trp-583–Leu-605, Pro-635–Met-655, Gly-660–Val-680, and Ile-702–Lys-722.

The protein belongs to the glycosyltransferase 2 family. Plant cellulose synthase-like G subfamily. As to expression, expressed in young seedlings, primarily in the vascular tissue.

Its subcellular location is the golgi apparatus membrane. In terms of biological role, thought to be a Golgi-localized beta-glycan synthase that polymerize the backbones of noncellulosic polysaccharides (hemicelluloses) of plant cell wall. This is Cellulose synthase-like protein G2 (CSLG2) from Arabidopsis thaliana (Mouse-ear cress).